A 689-amino-acid polypeptide reads, in one-letter code: Elongation factor G (689 aa).

The tr-type G domain occupies 9-283 (AKFRNIGIMA…AIVEFMPSPL (275 aa)). GTP contacts are provided by residues 18 to 25 (AHIDAGKT), 82 to 86 (DTPGH), and 136 to 139 (NKMD).

It belongs to the TRAFAC class translation factor GTPase superfamily. Classic translation factor GTPase family. EF-G/EF-2 subfamily.

The protein resides in the cytoplasm. In terms of biological role, catalyzes the GTP-dependent ribosomal translocation step during translation elongation. During this step, the ribosome changes from the pre-translocational (PRE) to the post-translocational (POST) state as the newly formed A-site-bound peptidyl-tRNA and P-site-bound deacylated tRNA move to the P and E sites, respectively. Catalyzes the coordinated movement of the two tRNA molecules, the mRNA and conformational changes in the ribosome. This Clostridium botulinum (strain Kyoto / Type A2) protein is Elongation factor G.